The chain runs to 215 residues: Cytochrome b6 (215 aa).

A helical transmembrane segment spans residues 32–52 (IFYCLGGITLTCFLVQVATGF). Residue Cys-35 participates in heme c binding. Residues His-86 and His-100 each coordinate heme b. 3 helical membrane passes run 90–110 (ASMM…TGGF), 116–136 (LTWV…VTGY), and 186–206 (LHTF…FLMI). Positions 187 and 202 each coordinate heme b.

The protein belongs to the cytochrome b family. PetB subfamily. In terms of assembly, the 4 large subunits of the cytochrome b6-f complex are cytochrome b6, subunit IV (17 kDa polypeptide, PetD), cytochrome f and the Rieske protein, while the 4 small subunits are PetG, PetL, PetM and PetN. The complex functions as a dimer. Heme b serves as cofactor. Heme c is required as a cofactor.

It localises to the plastid. Its subcellular location is the chloroplast thylakoid membrane. Its function is as follows. Component of the cytochrome b6-f complex, which mediates electron transfer between photosystem II (PSII) and photosystem I (PSI), cyclic electron flow around PSI, and state transitions. The chain is Cytochrome b6 from Klebsormidium bilatum (Filamentous green alga).